The primary structure comprises 249 residues: DNA polymerase sliding clamp (249 aa).

It belongs to the PCNA family. In terms of assembly, homotrimer. The subunits circularize to form a toroid; DNA passes through its center. Replication factor C (RFC) is required to load the toroid on the DNA.

Functionally, sliding clamp subunit that acts as a moving platform for DNA processing. Responsible for tethering the catalytic subunit of DNA polymerase and other proteins to DNA during high-speed replication. In Thermococcus gammatolerans (strain DSM 15229 / JCM 11827 / EJ3), this protein is DNA polymerase sliding clamp.